We begin with the raw amino-acid sequence, 306 residues long: Pseudouridine-5'-phosphate glycosidase (306 aa).

The active-site Proton donor is Glu-27. Substrate contacts are provided by Lys-88 and Val-108. Position 140 (Asp-140) interacts with Mn(2+). Residue Ser-142–Asp-144 coordinates substrate. The active-site Nucleophile is the Lys-161.

The protein belongs to the pseudouridine-5'-phosphate glycosidase family. Homotrimer. It depends on Mn(2+) as a cofactor.

The enzyme catalyses D-ribose 5-phosphate + uracil = psi-UMP + H2O. Functionally, catalyzes the reversible cleavage of pseudouridine 5'-phosphate (PsiMP) to ribose 5-phosphate and uracil. Functions biologically in the cleavage direction, as part of a pseudouridine degradation pathway. This Petrotoga mobilis (strain DSM 10674 / SJ95) protein is Pseudouridine-5'-phosphate glycosidase.